The chain runs to 439 residues: Glutamate--tRNA ligase 2 (439 aa).

Residues 9 to 19 (PSPTGHLHVGN) carry the 'HIGH' region motif. Residues 233–237 (KLSKR) carry the 'KMSKS' region motif. Lys236 is a binding site for ATP.

Belongs to the class-I aminoacyl-tRNA synthetase family. Glutamate--tRNA ligase type 1 subfamily. Monomer.

The protein resides in the cytoplasm. It catalyses the reaction tRNA(Glu) + L-glutamate + ATP = L-glutamyl-tRNA(Glu) + AMP + diphosphate. Catalyzes the attachment of glutamate to tRNA(Glu) in a two-step reaction: glutamate is first activated by ATP to form Glu-AMP and then transferred to the acceptor end of tRNA(Glu). The sequence is that of Glutamate--tRNA ligase 2 from Sphingopyxis alaskensis (strain DSM 13593 / LMG 18877 / RB2256) (Sphingomonas alaskensis).